The following is a 432-amino-acid chain: Adenylosuccinate synthetase (432 aa).

Residues 12–18 (GDEGKGK) and 40–42 (GHT) each bind GTP. The Proton acceptor role is filled by Asp13. 2 residues coordinate Mg(2+): Asp13 and Gly40. IMP is bound by residues 13–16 (DEGK), 38–41 (NAGH), Thr133, Arg147, Gln228, Thr243, and Arg307. His41 (proton donor) is an active-site residue. 303-309 (TTTGRPR) is a substrate binding site. GTP contacts are provided by residues Arg309, 335–337 (KLD), and 417–419 (GVG).

The protein belongs to the adenylosuccinate synthetase family. As to quaternary structure, homodimer. The cofactor is Mg(2+).

It is found in the cytoplasm. It catalyses the reaction IMP + L-aspartate + GTP = N(6)-(1,2-dicarboxyethyl)-AMP + GDP + phosphate + 2 H(+). The protein operates within purine metabolism; AMP biosynthesis via de novo pathway; AMP from IMP: step 1/2. In terms of biological role, plays an important role in the de novo pathway of purine nucleotide biosynthesis. Catalyzes the first committed step in the biosynthesis of AMP from IMP. The chain is Adenylosuccinate synthetase from Nocardioides sp. (strain ATCC BAA-499 / JS614).